A 149-amino-acid polypeptide reads, in one-letter code: Large ribosomal subunit protein bL9 (149 aa).

This sequence belongs to the bacterial ribosomal protein bL9 family.

Functionally, binds to the 23S rRNA. The chain is Large ribosomal subunit protein bL9 from Desulforamulus reducens (strain ATCC BAA-1160 / DSM 100696 / MI-1) (Desulfotomaculum reducens).